A 115-amino-acid chain; its full sequence is MNMIMAMLANISISSCLIIIAFWLPHLNIYTEKASPYECGFDPMSSARLPFSMKFFLVGITFLLFDLEIALLLPLPWALHSTNMFLTTLTSFILVSVLALGLAYEWMNKGLEWTE.

Transmembrane regions (helical) follow at residues 4–24 (IMAM…AFWL), 55–75 (FFLV…LLPL), and 84–104 (MFLT…GLAY).

Belongs to the complex I subunit 3 family. As to quaternary structure, core subunit of respiratory chain NADH dehydrogenase (Complex I) which is composed of 45 different subunits. Interacts with TMEM186. Interacts with TMEM242.

The protein localises to the mitochondrion inner membrane. The catalysed reaction is a ubiquinone + NADH + 5 H(+)(in) = a ubiquinol + NAD(+) + 4 H(+)(out). In terms of biological role, core subunit of the mitochondrial membrane respiratory chain NADH dehydrogenase (Complex I) which catalyzes electron transfer from NADH through the respiratory chain, using ubiquinone as an electron acceptor. Essential for the catalytic activity of complex I. The chain is NADH-ubiquinone oxidoreductase chain 3 from Phyllotis darwinii (Darwin's leaf-eared mouse).